A 389-amino-acid chain; its full sequence is 1-deoxy-D-xylulose 5-phosphate reductoisomerase (389 aa).

The NADPH site is built by T10, G11, S12, I13, N38, and N122. 1-deoxy-D-xylulose 5-phosphate is bound at residue K123. E124 contacts NADPH. Mn(2+) is bound at residue D148. 4 residues coordinate 1-deoxy-D-xylulose 5-phosphate: S149, E150, S173, and H196. E150 provides a ligand contact to Mn(2+). G202 is a binding site for NADPH. Residues S209, N214, K215, and E218 each coordinate 1-deoxy-D-xylulose 5-phosphate. E218 lines the Mn(2+) pocket.

The protein belongs to the DXR family. Mg(2+) serves as cofactor. Mn(2+) is required as a cofactor.

The enzyme catalyses 2-C-methyl-D-erythritol 4-phosphate + NADP(+) = 1-deoxy-D-xylulose 5-phosphate + NADPH + H(+). Its pathway is isoprenoid biosynthesis; isopentenyl diphosphate biosynthesis via DXP pathway; isopentenyl diphosphate from 1-deoxy-D-xylulose 5-phosphate: step 1/6. Its function is as follows. Catalyzes the NADPH-dependent rearrangement and reduction of 1-deoxy-D-xylulose-5-phosphate (DXP) to 2-C-methyl-D-erythritol 4-phosphate (MEP). The polypeptide is 1-deoxy-D-xylulose 5-phosphate reductoisomerase (Wolbachia sp. subsp. Brugia malayi (strain TRS)).